An 876-amino-acid polypeptide reads, in one-letter code: Exonuclease mut-7 homolog (876 aa).

The 3'-5' exonuclease domain maps to 517–571 (GLSLLVQQVLGTALDKTQQLSNWDRRPLCEEQVIYAAADAYCLLEVHQALCREPA). 2 disordered regions span residues 578-607 (DLAG…APAA) and 751-781 (SHQE…AAPE).

Belongs to the mut-7 family. It depends on Mg(2+) as a cofactor.

In terms of biological role, possesses 3'-5' exoribonuclease activity. Required for 3'-end trimming of AGO1-bound miRNAs. This is Exonuclease mut-7 homolog (EXD3) from Homo sapiens (Human).